The sequence spans 164 residues: Kunitz-type trypsin inhibitor BrTI (164 aa).

It belongs to the leguminous Kunitz-type inhibitor family.

Its function is as follows. Inhibitor of trypsin and human plasma kallikrein with a Ki of 2.9 nM and 14.0 nM, respectively. Does not inhibit chymotrypsin, porcine pancreatic elastas, human neutrophil elastase, coagulation factor Xa, human thrombin, porcine pancreatic kallikrein or plasmin. The polypeptide is Kunitz-type trypsin inhibitor BrTI (Bauhinia rufa (Orchid tree)).